A 335-amino-acid polypeptide reads, in one-letter code: Anthranilate phosphoribosyltransferase (335 aa).

5-phospho-alpha-D-ribose 1-diphosphate is bound by residues Gly-80, 83–84 (GD), Thr-88, 90–93 (NIST), 108–116 (KHGNRAVSS), and Ser-120. Gly-80 is a binding site for anthranilate. Ser-92 provides a ligand contact to Mg(2+). Position 111 (Asn-111) interacts with anthranilate. Residue Arg-166 coordinates anthranilate. Mg(2+) is bound by residues Asp-225 and Glu-226.

This sequence belongs to the anthranilate phosphoribosyltransferase family. Homodimer. Mg(2+) is required as a cofactor.

The catalysed reaction is N-(5-phospho-beta-D-ribosyl)anthranilate + diphosphate = 5-phospho-alpha-D-ribose 1-diphosphate + anthranilate. Its pathway is amino-acid biosynthesis; L-tryptophan biosynthesis; L-tryptophan from chorismate: step 2/5. Functionally, catalyzes the transfer of the phosphoribosyl group of 5-phosphorylribose-1-pyrophosphate (PRPP) to anthranilate to yield N-(5'-phosphoribosyl)-anthranilate (PRA). The polypeptide is Anthranilate phosphoribosyltransferase (Clostridium kluyveri (strain NBRC 12016)).